A 588-amino-acid polypeptide reads, in one-letter code: Calicin (588 aa).

A BTB domain is found at 28–98 (WDIALTVDHH…FYSGKVVISE (71 aa)). Serine 149 carries the phosphoserine modification. Kelch repeat units follow at residues 280–327 (SVVI…SAGR), 328–375 (YIYI…TCGG), 377–423 (VYSV…TRGD), 425–475 (NLYI…SFHQ), 476–525 (DNIL…VGDN), and 526–580 (KVFV…LAKL).

In terms of assembly, interacts with CYLC1; the interaction may be relevant for proper acrosome attachment to the nuclear envelope. As to expression, expressed in testis and in spermatozoa (at protein level).

It localises to the cytoplasm. The protein resides in the cytoskeleton. Its subcellular location is the perinuclear theca. The protein localises to the calyx. Required for both nuclear and acrosomal shaping during spermiogenesis. This Bos taurus (Bovine) protein is Calicin (CCIN).